The sequence spans 315 residues: Methionyl-tRNA formyltransferase (315 aa).

113-116 (SLLP) lines the (6S)-5,6,7,8-tetrahydrofolate pocket.

Belongs to the Fmt family.

It carries out the reaction L-methionyl-tRNA(fMet) + (6R)-10-formyltetrahydrofolate = N-formyl-L-methionyl-tRNA(fMet) + (6S)-5,6,7,8-tetrahydrofolate + H(+). In terms of biological role, attaches a formyl group to the free amino group of methionyl-tRNA(fMet). The formyl group appears to play a dual role in the initiator identity of N-formylmethionyl-tRNA by promoting its recognition by IF2 and preventing the misappropriation of this tRNA by the elongation apparatus. This Shigella boydii serotype 18 (strain CDC 3083-94 / BS512) protein is Methionyl-tRNA formyltransferase.